Reading from the N-terminus, the 175-residue chain is MAAVSMSVSLRQALLRQRAVATAAVSVCRVPSRLLNTSTWKLADGQTRDTQLITVDEKLDVTPLTGVPEEHIKTRKVRIFVPARNNMQSGVNNTKKWKMEFDTRERWENPLMGWASTADPLSNMVLTFSAKEDAVAFAEKHGWSYDVEGRKVPKPKSKSYGANFSWNKRTRVSTK.

The N-terminal 42 residues, 1–42 (MAAVSMSVSLRQALLRQRAVATAAVSVCRVPSRLLNTSTWKL), are a transit peptide targeting the mitochondrion. The segment at 152 to 175 (VPKPKSKSYGANFSWNKRTRVSTK) is disordered. Ser-173 bears the Phosphoserine mark.

Belongs to the complex I NDUFS4 subunit family. Mammalian complex I is composed of 45 different subunits. This is a component of the iron-sulfur (IP) fragment of the enzyme. Interacts with BCAP31 and TOMM40; the interaction mediates its translocation to the mitochondria; the interaction with BCAP31 is direct.

Its subcellular location is the mitochondrion inner membrane. Functionally, accessory subunit of the mitochondrial membrane respiratory chain NADH dehydrogenase (Complex I), that is believed not to be involved in catalysis. Complex I functions in the transfer of electrons from NADH to the respiratory chain. The immediate electron acceptor for the enzyme is believed to be ubiquinone. This Rattus norvegicus (Rat) protein is NADH dehydrogenase [ubiquinone] iron-sulfur protein 4, mitochondrial (Ndufs4).